Consider the following 571-residue polypeptide: Kinesin light chain (571 aa).

The stretch at 54–160 forms a coiled coil; it reads LLTSMKTIRK…KKHLEFMNEM (107 aa). A compositionally biased stretch (basic and acidic residues) spans 167–177; sequence EAQVNEEKESE. Residues 167-210 are disordered; sequence EAQVNEEKESEQSSLDLGFPDDDDDGGQPEVLSPTQPSAMAQAA. 6 TPR repeats span residues 220–253, 262–295, 304–337, 346–379, 388–421, and 471–504; these read LRTL…LEKT, ATML…REKT, AATL…REKV, AKQL…YQKE, AKTK…AHEK, and TTTL…RKSA. The tract at residues 518–571 is disordered; that stretch reads GSDFSKGQSPKDRKRSNSRDRNRRDSMDSVSYEKSGDGDEHEKSKLHVGTSHKQ. Basic and acidic residues-rich tracts occupy residues 526 to 544 and 551 to 562; these read SPKD…RDSM and KSGDGDEHEKSK.

Belongs to the kinesin light chain family. Oligomeric complex composed of two heavy chains and two light chains.

Its subcellular location is the cytoplasm. It localises to the cytoskeleton. Its function is as follows. Kinesin is a microtubule-associated force-producing protein that may play a role in organelle transport. The light chain may function in coupling of cargo to the heavy chain or in the modulation of its ATPase activity. In Doryteuthis pealeii (Longfin inshore squid), this protein is Kinesin light chain.